Consider the following 859-residue polypeptide: Cation/H(+) antiporter 24 (859 aa).

Transmembrane regions (helical) follow at residues 64–84 (AFSTFLIEAIIIIFFIKVVSI), 92–112 (PRIVSEIIGGMMIGPSMFGGI), 122–142 (PIANYICANIGLMGFFYFLFL), 161–181 (YIAAIGVIVPIICVGSVGMAM), 194–214 (SIGGVVFALSFTSFPVIYTVL), 227–247 (FAMSVALLGDMAGVYVIVIFE), 258–278 (YSVFWFLVSVVIFAAFMLLVV), 291–311 (EGTLVNQNYIVMILMGVLASC), 312–332 (FLTDMFGLSIAVGPIWLGLLV), 348–368 (TFIYEFLMPFTYALVGQGTNI), 384–404 (FYMTVVGFITKFLSTAFAALF), and 438–458 (IVGFPGYTVMVLHTVVVTAVT). Positions 538-566 (IDHEQRKEEEEEEYEEEEEEPERKQSGRI) are disordered. Acidic residues predominate over residues 546–557 (EEEEEYEEEEEE). Phosphoserine is present on Ser-857.

It belongs to the monovalent cation:proton antiporter 2 (CPA2) transporter (TC 2.A.37) family. CHX (TC 2.A.37.4) subfamily. In terms of tissue distribution, specifically expressed in pollen.

It is found in the membrane. In terms of biological role, may operate as a cation/H(+) antiporter. This Arabidopsis thaliana (Mouse-ear cress) protein is Cation/H(+) antiporter 24 (CHX24).